The primary structure comprises 135 residues: Small ribosomal subunit protein uS8 (135 aa).

Belongs to the universal ribosomal protein uS8 family. Part of the 30S ribosomal subunit. Contacts proteins S5 and S12.

Functionally, one of the primary rRNA binding proteins, it binds directly to 16S rRNA central domain where it helps coordinate assembly of the platform of the 30S subunit. The sequence is that of Small ribosomal subunit protein uS8 from Parafrankia sp. (strain EAN1pec).